The chain runs to 352 residues: DNA polymerase IV (352 aa).

The UmuC domain occupies 6-186 (IIHIDMDAFY…LPLGKIPGAG (181 aa)). Mg(2+)-binding residues include aspartate 10 and aspartate 104. Residue glutamate 105 is part of the active site.

Belongs to the DNA polymerase type-Y family. In terms of assembly, monomer. The cofactor is Mg(2+).

Its subcellular location is the cytoplasm. The catalysed reaction is DNA(n) + a 2'-deoxyribonucleoside 5'-triphosphate = DNA(n+1) + diphosphate. Functionally, poorly processive, error-prone DNA polymerase involved in untargeted mutagenesis. Copies undamaged DNA at stalled replication forks, which arise in vivo from mismatched or misaligned primer ends. These misaligned primers can be extended by PolIV. Exhibits no 3'-5' exonuclease (proofreading) activity. May be involved in translesional synthesis, in conjunction with the beta clamp from PolIII. In Neisseria gonorrhoeae (strain ATCC 700825 / FA 1090), this protein is DNA polymerase IV.